The following is a 354-amino-acid chain: DnaJ homolog shv (354 aa).

The N-terminal stretch at 1–22 (MQLIKCLVIIQLSLLLVEESFA) is a signal peptide. The J domain occupies 25 to 90 (DFYKILNVKK…DKRKTYDRCG (66 aa)). N-linked (GlcNAc...) asparagine glycans are attached at residues N260 and N312.

As to expression, in the testes, detected at low levels in somatic hub cells, cyst stem cells and the apical tip (at protein level). Levels in the testes decrease with age (at protein level). Expressed at low levels in hub cells, cyst stem cells and germline stem cells, and at high levels in spermatocytes and cyst cells.

It localises to the nucleus. Its subcellular location is the cell membrane. The protein localises to the secreted. In terms of biological role, maintains stem cell niche architecture in the testes. Activates an extracellular integrin beta-PS pathway which regulates DE-cadherin (shg) levels in somatic hub cells, and is essential for maintaining the number of germline stem cells and the structure and localization of hub cells. The protein is DnaJ homolog shv of Drosophila melanogaster (Fruit fly).